The sequence spans 517 residues: Aldehyde dehydrogenase X, mitochondrial (517 aa).

The transit peptide at 1-17 (MLRFLAPRLLSLQGRTA) directs the protein to the mitochondrion. N6-acetyllysine is present on Lys51. The residue at position 52 (Lys52) is an N6-acetyllysine; alternate. Position 52 is an N6-succinyllysine; alternate (Lys52). Residue Lys81 is modified to N6-succinyllysine. 262-267 (GSTEVG) serves as a coordination point for NAD(+). Glu285 acts as the Proton acceptor in catalysis. The active-site Nucleophile is the Cys319. Lys364, Lys383, Lys399, Lys414, and Lys426 each carry N6-acetyllysine; alternate. Residues Lys364, Lys383, Lys399, Lys414, and Lys426 each carry the N6-succinyllysine; alternate modification. Lys429 carries the N6-acetyllysine modification.

The protein belongs to the aldehyde dehydrogenase family. As to quaternary structure, homotetramer. Liver, testis and to a lesser extent in brain.

The protein resides in the mitochondrion matrix. It carries out the reaction an aldehyde + NAD(+) + H2O = a carboxylate + NADH + 2 H(+). Its pathway is alcohol metabolism; ethanol degradation; acetate from ethanol: step 2/2. ALDHs play a major role in the detoxification of alcohol-derived acetaldehyde. They are involved in the metabolism of corticosteroids, biogenic amines, neurotransmitters, and lipid peroxidation. This Homo sapiens (Human) protein is Aldehyde dehydrogenase X, mitochondrial (ALDH1B1).